The sequence spans 147 residues: ATP synthase subunit 9, mitochondrial (147 aa).

The N-terminal 66 residues, 1–66 (MASTRVLASR…TTRQAFQKRA (66 aa)), are a transit peptide targeting the mitochondrion. 2 helical membrane passes run 86 to 106 (SAAIGLTGAGIGIGLVFAALL) and 123 to 143 (AILGFAFVEAIGLFDLMVALM).

This sequence belongs to the ATPase C chain family. As to quaternary structure, F-type ATPases have 2 components, CF(1) - the catalytic core - and CF(0) - the membrane proton channel. CF(1) has five subunits: alpha(3), beta(3), gamma(1), delta(1), epsilon(1). CF(0) has three main subunits: a, b and c.

Its subcellular location is the mitochondrion membrane. Its function is as follows. Mitochondrial membrane ATP synthase (F(1)F(0) ATP synthase or Complex V) produces ATP from ADP in the presence of a proton gradient across the membrane which is generated by electron transport complexes of the respiratory chain. F-type ATPases consist of two structural domains, F(1) - containing the extramembraneous catalytic core and F(0) - containing the membrane proton channel, linked together by a central stalk and a peripheral stalk. During catalysis, ATP synthesis in the catalytic domain of F(1) is coupled via a rotary mechanism of the central stalk subunits to proton translocation. Part of the complex F(0) domain. A homomeric c-ring of probably 10 subunits is part of the complex rotary element. This chain is ATP synthase subunit 9, mitochondrial (oli), found in Neurospora crassa (strain ATCC 24698 / 74-OR23-1A / CBS 708.71 / DSM 1257 / FGSC 987).